The sequence spans 247 residues: NifU-like scaffold protein (247 aa).

The protein belongs to the NifU family. In terms of assembly, homodimer.

Its subcellular location is the plastid. It is found in the apicoplast. It functions in the pathway cofactor biosynthesis; iron-sulfur cluster biosynthesis. Binds and transfers [4Fe-4S] iron-sulfur clusters to target proteins. The sequence is that of NifU-like scaffold protein from Plasmodium falciparum (isolate 3D7).